A 197-amino-acid polypeptide reads, in one-letter code: Segregation and condensation protein B (197 aa).

It belongs to the ScpB family. Homodimer. Homodimerization may be required to stabilize the binding of ScpA to the Smc head domains. Component of a cohesin-like complex composed of ScpA, ScpB and the Smc homodimer, in which ScpA and ScpB bind to the head domain of Smc. The presence of the three proteins is required for the association of the complex with DNA.

The protein localises to the cytoplasm. Its function is as follows. Participates in chromosomal partition during cell division. May act via the formation of a condensin-like complex containing Smc and ScpA that pull DNA away from mid-cell into both cell halves. The chain is Segregation and condensation protein B from Bacillus pumilus (strain SAFR-032).